A 149-amino-acid polypeptide reads, in one-letter code: Arginine repressor (149 aa).

This sequence belongs to the ArgR family.

Its subcellular location is the cytoplasm. The protein operates within amino-acid biosynthesis; L-arginine biosynthesis [regulation]. In terms of biological role, regulates arginine biosynthesis genes. This is Arginine repressor from Chlorobium phaeobacteroides (strain DSM 266 / SMG 266 / 2430).